Here is a 279-residue protein sequence, read N- to C-terminus: Homeobox protein BarH-like 2 (279 aa).

2 disordered regions span residues 110–137 (APGG…RRSR) and 194–279 (KGGQ…PPLS). A compositionally biased stretch (polar residues) spans 118–128 (SSESETEQPTP). A DNA-binding region (homeobox) is located at residues 133–192 (PRRSRTIFTELQLMGLEKKFQKQKYLSTPDRLDLAQSLGLTQLQVKTWYQNRRMKWKKMV). Over residues 225-240 (NSQAQGQEQLEPSQGQ) the composition is skewed to polar residues. The span at 261–279 (PPDPPQELPIPSSEPPPLS) shows a compositional bias: pro residues.

The protein belongs to the BAR homeobox family. Highly expressed in adult salivary gland and at much lower levels in mammary gland, kidney and placenta.

The protein resides in the nucleus. In terms of biological role, transcription factor. Binds optimally to the DNA consensus sequence 5'-YYTAATGRTTTTY-3'. May control the expression of neural adhesion molecules such as L1 or Ng-CAM during embryonic development of both the central and peripherical nervous system. May be involved in controlling adhesive processes in keratinizing epithelia. In Homo sapiens (Human), this protein is Homeobox protein BarH-like 2 (BARX2).